The sequence spans 559 residues: O-fucosyltransferase 37 (559 aa).

Residues 53 to 73 (FFLLLISLSLVFSGISFLTFS) traverse the membrane as a helical; Signal-anchor for type II membrane protein segment. N-linked (GlcNAc...) asparagine glycosylation is present at Asn126. 331–333 (HLR) contacts substrate. N-linked (GlcNAc...) asparagine glycosylation is found at Asn372, Asn403, Asn447, and Asn504.

The protein belongs to the glycosyltransferase GT106 family.

The protein resides in the membrane. It participates in glycan metabolism. This is O-fucosyltransferase 37 from Arabidopsis thaliana (Mouse-ear cress).